Here is a 651-residue protein sequence, read N- to C-terminus: Chaperone protein HtpG (651 aa).

An a; substrate-binding region spans residues M1–R353. The interval E354 to R569 is b. The c stretch occupies residues M570–S651.

The protein belongs to the heat shock protein 90 family. Homodimer.

Its subcellular location is the cytoplasm. Its function is as follows. Molecular chaperone. Has ATPase activity. The chain is Chaperone protein HtpG from Mycolicibacterium gilvum (strain PYR-GCK) (Mycobacterium gilvum (strain PYR-GCK)).